Consider the following 1196-residue polypeptide: Major DNA-binding protein (1196 aa).

The segment at cysteine 499 to histidine 512 is a zinc-finger region. 2 short sequence motifs (required for filament formation) span residues phenylalanine 843–tryptophan 844 and phenylalanine 1142–phenylalanine 1144. Residues glycine 1158–leucine 1196 form a disordered region. Residues arginine 1170–leucine 1196 form a required for nuclear localization region. Positions phenylalanine 1174–leucine 1196 are enriched in basic and acidic residues.

Belongs to the herpesviridae major DNA-binding protein family. In terms of assembly, homooligomers. Forms double-helical filaments necessary for the formation of replication compartments within the host nucleus. Interacts with the origin-binding protein. Interacts with the helicase primase complex; this interaction stimulates primer synthesis activity of the helicase-primase complex. Interacts with the DNA polymerase. Interacts with the alkaline exonuclease; this interaction increases its nuclease processivity. Interacts with ICP27; this interaction plays a role in the stimulation of late gene transcription.

Its subcellular location is the host nucleus. Plays several crucial roles in viral infection. Participates in the opening of the viral DNA origin to initiate replication by interacting with the origin-binding protein. May disrupt loops, hairpins and other secondary structures present on ssDNA to reduce and eliminate pausing of viral DNA polymerase at specific sites during elongation. Promotes viral DNA recombination by performing strand-transfer, characterized by the ability to transfer a DNA strand from a linear duplex to a complementary single-stranded DNA circle. Can also catalyze the renaturation of complementary single strands. Additionally, reorganizes the host cell nucleus, leading to the formation of prereplicative sites and replication compartments. This process is driven by the protein which can form double-helical filaments in the absence of DNA. This Homo sapiens (Human) protein is Major DNA-binding protein.